We begin with the raw amino-acid sequence, 105 residues long: uncharacterized protein (105 aa).

2 helical membrane-spanning segments follow: residues 56-76 (ALIW…VLII) and 85-105 (INLN…GVFY).

Its subcellular location is the membrane. This is an uncharacterized protein from Aedes vexans (Inland floodwater mosquito).